The sequence spans 246 residues: MEIIPAIDLQNGEAVRLYKGDYDKKTVYSKNPLEIAQKFEQMEAKYLHLVDLDGAKLGQTRNLEIVRKIKDQTNLKIEIGGGIRNLDTVSLYLEQIGVERVILGTAAAEKPDFLKELLVKYGLSRIVVGVDIREGFVSTSGWLEKTTLPYLSFLKDLEKIGVKTVIVTDISKDGTLTGPNFELYDEISKETSLDVIVSGGVKDSSDIQRAADSDFYGIIVGKAYYEGKINLEKEFNHANKKNYPLS.

Aspartate 8 (proton acceptor) is an active-site residue. The active-site Proton donor is the aspartate 131.

Belongs to the HisA/HisF family.

The protein resides in the cytoplasm. The catalysed reaction is 1-(5-phospho-beta-D-ribosyl)-5-[(5-phospho-beta-D-ribosylamino)methylideneamino]imidazole-4-carboxamide = 5-[(5-phospho-1-deoxy-D-ribulos-1-ylimino)methylamino]-1-(5-phospho-beta-D-ribosyl)imidazole-4-carboxamide. Its pathway is amino-acid biosynthesis; L-histidine biosynthesis; L-histidine from 5-phospho-alpha-D-ribose 1-diphosphate: step 4/9. The polypeptide is 1-(5-phosphoribosyl)-5-[(5-phosphoribosylamino)methylideneamino] imidazole-4-carboxamide isomerase (Lactococcus lactis subsp. cremoris (strain MG1363)).